A 294-amino-acid chain; its full sequence is Probable HTH-type transcriptional regulator LrrA (294 aa).

Positions 1–58 (MNITQLQILAAVVETGNFSAAALQLDLSQSAVSRAIAALEDELGVVLLSRGRFGARPT) constitute an HTH lysR-type domain. Residues 18–37 (FSAAALQLDLSQSAVSRAIA) constitute a DNA-binding region (H-T-H motif).

The protein belongs to the LysR transcriptional regulatory family.

This Synechococcus elongatus (strain ATCC 33912 / PCC 7942 / FACHB-805) (Anacystis nidulans R2) protein is Probable HTH-type transcriptional regulator LrrA (lrrA).